The primary structure comprises 1410 residues: ABC transporter C family member 13 (1410 aa).

The next 8 membrane-spanning stretches (helical) occupy residues I23 to T43, L60 to V80, V88 to L108, I122 to F142, Q148 to I168, L391 to I411, V474 to L494, and F505 to I525. Positions C255–D530 constitute an ABC transmembrane type-1 1 domain. An ABC transporter 1 domain is found at V564–E791. G602 to T609 contacts ATP. A run of 6 helical transmembrane segments spans residues A844–G864, T889–V909, S963–L985, V990–F1009, I1087–F1107, and G1111–L1131. An ABC transmembrane type-1 2 domain is found at T852 to K1139. The 234-residue stretch at V1174–R1407 folds into the ABC transporter 2 domain. G1208–S1215 lines the ATP pocket.

It belongs to the ABC transporter superfamily. ABCC family. Conjugate transporter (TC 3.A.1.208) subfamily. As to expression, ubiquitous.

The protein localises to the membrane. It catalyses the reaction ATP + H2O + xenobioticSide 1 = ADP + phosphate + xenobioticSide 2.. Its function is as follows. Pump for glutathione S-conjugates. In Arabidopsis thaliana (Mouse-ear cress), this protein is ABC transporter C family member 13 (ABCC13).